The chain runs to 176 residues: Large ribosomal subunit protein bL28m (176 aa).

A mitochondrion-targeting transit peptide spans 1 to 8 (MASKLLRK).

It belongs to the bacterial ribosomal protein bL28 family. As to quaternary structure, component of the mitochondrial large ribosomal subunit (mt-LSU). Mature yeast 74S mitochondrial ribosomes consist of a small (37S) and a large (54S) subunit. The 37S small subunit contains a 15S ribosomal RNA (15S mt-rRNA) and at least 32 different proteins. The 54S large subunit contains a 21S rRNA (21S mt-rRNA) and at least 45 different proteins.

Its subcellular location is the cytoplasm. It localises to the mitochondrion. Its function is as follows. Component of the mitochondrial ribosome (mitoribosome), a dedicated translation machinery responsible for the synthesis of mitochondrial genome-encoded proteins, including at least some of the essential transmembrane subunits of the mitochondrial respiratory chain. The mitoribosomes are attached to the mitochondrial inner membrane and translation products are cotranslationally integrated into the membrane. This chain is Large ribosomal subunit protein bL28m (mrpl24), found in Schizosaccharomyces pombe (strain 972 / ATCC 24843) (Fission yeast).